The following is a 372-amino-acid chain: 4-hydroxy-3-methylbut-2-en-1-yl diphosphate synthase (flavodoxin) (372 aa).

Residues cysteine 270, cysteine 273, cysteine 305, and glutamate 312 each contribute to the [4Fe-4S] cluster site.

This sequence belongs to the IspG family. It depends on [4Fe-4S] cluster as a cofactor.

It carries out the reaction (2E)-4-hydroxy-3-methylbut-2-enyl diphosphate + oxidized [flavodoxin] + H2O + 2 H(+) = 2-C-methyl-D-erythritol 2,4-cyclic diphosphate + reduced [flavodoxin]. Its pathway is isoprenoid biosynthesis; isopentenyl diphosphate biosynthesis via DXP pathway; isopentenyl diphosphate from 1-deoxy-D-xylulose 5-phosphate: step 5/6. Converts 2C-methyl-D-erythritol 2,4-cyclodiphosphate (ME-2,4cPP) into 1-hydroxy-2-methyl-2-(E)-butenyl 4-diphosphate. This chain is 4-hydroxy-3-methylbut-2-en-1-yl diphosphate synthase (flavodoxin), found in Vibrio vulnificus (strain CMCP6).